The primary structure comprises 735 residues: Translation initiation factor IF-2 (735 aa).

2 stretches are compositionally biased toward basic and acidic residues: residues 52 to 66 (VNSE…EKPK) and 101 to 117 (KGKE…EKKL). Positions 52 to 154 (VNSEKKAEKK…PAKKEKELPK (103 aa)) are disordered. Basic residues predominate over residues 121-133 (AKKKGKGPMKGKK). Over residues 134–145 (QAAPASKQAQQP) the composition is skewed to low complexity. The 170-residue stretch at 236–405 (ERPPVVTIMG…LLVSEMEELK (170 aa)) folds into the tr-type G domain. The G1 stretch occupies residues 245–252 (GHVDHGKT). Position 245–252 (245–252 (GHVDHGKT)) interacts with GTP. The tract at residues 270–274 (GITQH) is G2. The segment at 291 to 294 (DTPG) is G3. GTP is bound by residues 291-295 (DTPGH) and 345-348 (NKMD). The tract at residues 345–348 (NKMD) is G4. The G5 stretch occupies residues 381-383 (SAK).

This sequence belongs to the TRAFAC class translation factor GTPase superfamily. Classic translation factor GTPase family. IF-2 subfamily.

It is found in the cytoplasm. One of the essential components for the initiation of protein synthesis. Protects formylmethionyl-tRNA from spontaneous hydrolysis and promotes its binding to the 30S ribosomal subunits. Also involved in the hydrolysis of GTP during the formation of the 70S ribosomal complex. The chain is Translation initiation factor IF-2 from Geobacillus thermodenitrificans (strain NG80-2).